We begin with the raw amino-acid sequence, 398 residues long: Phosphoglycerate kinase (398 aa).

Residues 21–23, Arg36, 59–62, Arg119, and Arg157 contribute to the substrate site; these read DFN and HLGR. ATP is bound by residues Lys208, Gly296, Glu327, and 354 to 357; that span reads GGDS.

The protein belongs to the phosphoglycerate kinase family. In terms of assembly, monomer.

Its subcellular location is the cytoplasm. It catalyses the reaction (2R)-3-phosphoglycerate + ATP = (2R)-3-phospho-glyceroyl phosphate + ADP. Its pathway is carbohydrate degradation; glycolysis; pyruvate from D-glyceraldehyde 3-phosphate: step 2/5. This Streptococcus pyogenes serotype M1 protein is Phosphoglycerate kinase (pgk).